The chain runs to 445 residues: von Willebrand factor A domain-containing protein 1 (445 aa).

Positions 1–22 are cleaved as a signal peptide; the sequence is MLPWTALGLALSLRLALARSGA. The VWFA domain occupies 34–213; sequence DLMFLLDSSA…ELRGSILDAM (180 aa). A phosphoserine; by FAM20C mark is found at Ser-74 and Ser-80. Tyr-83 carries the phosphotyrosine modification. Ser-93 bears the Phosphoserine; by FAM20C mark. The region spanning 214–304 is the Fibronectin type-III 1 domain; it reads RPQQLHATEI…QILRVRTRPG (91 aa). Asn-264 carries an N-linked (GlcNAc...) asparagine glycan. 2 disordered regions span residues 302-325 and 411-445; these read RPGE…TQLA and RESA…SREP. The span at 311–325 shows a compositional bias: low complexity; that stretch reads SGPESGAGPAPTQLA. In terms of domain architecture, Fibronectin type-III 2 spans 334–427; that stretch reads GPERIVISHA…KACTPDGPRP (94 aa).

In terms of assembly, homodimer or homomultimer; disulfide-linked. Interacts with HSPG2. Post-translationally, N-glycosylated.

The protein resides in the secreted. Its subcellular location is the extracellular space. It is found in the extracellular matrix. It localises to the basement membrane. Promotes matrix assembly. Involved in the organization of skeletal muscles and in the formation of neuromuscular junctions. This is von Willebrand factor A domain-containing protein 1 from Homo sapiens (Human).